The sequence spans 236 residues: CD81 antigen (236 aa).

Residues 1-12 lie on the Cytoplasmic side of the membrane; that stretch reads MGVEGCTKCIKY. Residues 13 to 33 form a helical membrane-spanning segment; the sequence is LLFVFNFVFWLAGGVILGVAL. At 34–63 the chain is on the extracellular side; that stretch reads WLRHDPQTTNLLYLELGDRPAPNTFYVGIY. A helical transmembrane segment spans residues 64-84; it reads ILIAVGAVMMFVGFLGCYGAI. Residues 85 to 89 are Cytoplasmic-facing; the sequence is QESQC. The chain crosses the membrane as a helical span at residues 90-112; the sequence is LLGTFFTCLVILFACEVAAGIWG. The Extracellular segment spans residues 113–201; the sequence is FVNKDQIAKD…GKIDELFSGK (89 aa). 2 disulfides stabilise this stretch: Cys156–Cys190 and Cys157–Cys175. The chain crosses the membrane as a helical span at residues 202–224; the sequence is LYLIGIAAIVVAVIMIFEMILSM. Glu219 serves as a coordination point for cholesterol. Over 225-236 the chain is Cytoplasmic; it reads VLCCGIRNSSVY.

It belongs to the tetraspanin (TM4SF) family. Homodimer. Part of a complex composed of CD19, CR2/CD21, CD81 and IFITM1/CD225 in the membrane of mature B cells. Interacts (via the second extracellular domain) with CD19; this interaction is initiated early during biosynthesis in the ER and enables trafficking of only properly folded CD19. Part of a complex that includes MHC class II/HLA-DR molecules and IFITM1. Interacts with IFITM1. Interacts with IFITM2 and IFITM3. Part of integrin-tetraspanin complex composed of CD9, CD81, beta-1 and beta-2 integrins in the membrane of monocyte/macrophages. Interacts (via the second extracellular domain) with integrin ITGAV:ITGB3. Interacts with CD247/CD3 zeta, ICAM1 and CD9 at the immune synapse on T cell membrane. Part of a GPCR-tetraspanin complex consisting at least of ADGRG1, CD81, possibly CD9, and GNA11 in which CD81 enhances the association of ADGRG1 with GNA11. Part of a complex composed of CD9, CD81, PTGFRN and IGSF8. Interacts directly with IGSF8. Interacts with CD53 and SCIMP. Interacts with SAMHD1 (via its C-terminus). Interacts with glypican GPC3 and with the transcriptional repressor HHEX; binding to GPC3 decreases the availability of free CD81 for binding to HHEX, resulting in nuclear translocation of HHEX and transcriptional repression. Interacts with CLDN1. Interacts with CLDN6 and CLDN9. In terms of processing, not glycosylated. Post-translationally, likely constitutively palmitoylated at low levels. Protein palmitoylation is up-regulated upon coligation of BCR and CD9-C2R-CD81 complexes in lipid rafts.

The protein resides in the cell membrane. The protein localises to the basolateral cell membrane. Functionally, structural component of specialized membrane microdomains known as tetraspanin-enriched microdomains (TERMs), which act as platforms for receptor clustering and signaling. Essential for trafficking and compartmentalization of CD19 receptor on the surface of activated B cells. Upon initial encounter with microbial pathogens, enables the assembly of CD19-CR2/CD21 and B cell receptor (BCR) complexes at signaling TERMs, lowering the threshold dose of antigen required to trigger B cell clonal expansion and antibody production. In T cells, facilitates the localization of CD247/CD3 zeta at antigen-induced synapses with B cells, providing for costimulation and polarization toward T helper type 2 phenotype. Present in MHC class II compartments, may also play a role in antigen presentation. Can act both as positive and negative regulator of homotypic or heterotypic cell-cell fusion processes. Positively regulates sperm-egg fusion and may be involved in acrosome reaction. In myoblasts, associates with CD9 and PTGFRN and inhibits myotube fusion during muscle regeneration. In macrophages, associates with CD9 and beta-1 and beta-2 integrins, and prevents macrophage fusion into multinucleated giant cells specialized in ingesting complement-opsonized large particles. Also prevents the fusion of mononuclear cell progenitors into osteoclasts in charge of bone resorption. May regulate the compartmentalization of enzymatic activities. In T cells, defines the subcellular localization of dNTPase SAMHD1 and permits its degradation by the proteasome, thereby controlling intracellular dNTP levels. Also involved in cell adhesion and motility. Positively regulates integrin-mediated adhesion of macrophages, particularly relevant for the inflammatory response in the lung. This Bos taurus (Bovine) protein is CD81 antigen (CD81).